Consider the following 382-residue polypeptide: Lipid-A-disaccharide synthase (382 aa).

It belongs to the LpxB family.

It carries out the reaction 2-N,3-O-bis[(3R)-3-hydroxytetradecanoyl]-alpha-D-glucosaminyl 1-phosphate + UDP-2-N,3-O-bis[(3R)-3-hydroxytetradecanoyl]-alpha-D-glucosamine = lipid A disaccharide (E. coli) + UDP + H(+). The enzyme catalyses a lipid X + a UDP-2-N,3-O-bis[(3R)-3-hydroxyacyl]-alpha-D-glucosamine = a lipid A disaccharide + UDP + H(+). It functions in the pathway glycolipid biosynthesis; lipid IV(A) biosynthesis; lipid IV(A) from (3R)-3-hydroxytetradecanoyl-[acyl-carrier-protein] and UDP-N-acetyl-alpha-D-glucosamine: step 5/6. Condensation of UDP-2,3-diacylglucosamine and 2,3-diacylglucosamine-1-phosphate to form lipid A disaccharide, a precursor of lipid A, a phosphorylated glycolipid that anchors the lipopolysaccharide to the outer membrane of the cell. This Escherichia coli (strain 55989 / EAEC) protein is Lipid-A-disaccharide synthase.